A 915-amino-acid polypeptide reads, in one-letter code: Metabotropic glutamate receptor 7 (915 aa).

The first 34 residues, 1 to 34 (MVQLGKLLRVLTLMKFPCCVLEVLLCVLAAAARG), serve as a signal peptide directing secretion. Topologically, residues 35–590 (QEMYAPHSIR…IIKLEWHSPW (556 aa)) are extracellular. C67 and C109 form a disulfide bridge. The N-linked (GlcNAc...) asparagine glycan is linked to N98. Residues S159, 180–182 (AST), Y230, and D314 each bind L-glutamate. Intrachain disulfides connect C249/C541, C374/C390, C430/C437, C523/C542, C527/C545, C548/C560, and C563/C576. An L-glutamate-binding site is contributed by K407. N-linked (GlcNAc...) asparagine glycans are attached at residues N458 and N486. N572 carries N-linked (GlcNAc...) asparagine glycosylation. A helical membrane pass occupies residues 591-615 (AVIPVFLAMLGIIATIFVMATFIRY). Residues 616–627 (NDTPIVRASGRE) lie on the Cytoplasmic side of the membrane. The helical transmembrane segment at 628–648 (LSYVLLTGIFLCYIITFLMIA) threads the bilayer. The Extracellular portion of the chain corresponds to 649–654 (KPDVAV). Residues 655 to 675 (CSFRRVFLGLGMCISYAALLT) traverse the membrane as a helical segment. The Cytoplasmic segment spans residues 676 to 702 (KTNRIYRIFEQGKKSVTAPRLISPTSQ). The helical transmembrane segment at 703 to 723 (LAITSSLISVQLLGVFIWFGV) threads the bilayer. Residues 724-753 (DPPNIIIDYDEHKTMNPEQARGVLKCDITD) are Extracellular-facing. A helical transmembrane segment spans residues 754–775 (LQIICSLGYSILLMVTCTVYAI). Topologically, residues 776 to 788 (KTRGVPENFNEAK) are cytoplasmic. Residues 789 to 810 (PIGFTMYTTCIVWLAFIPIFFG) form a helical membrane-spanning segment. Residues 811–825 (TAQSAEKLYIQTTTL) lie on the Extracellular side of the membrane. The helical transmembrane segment at 826 to 850 (TISMNLSASVALGMLYMPKVYIIIF) threads the bilayer. The Cytoplasmic portion of the chain corresponds to 851–915 (HPELNVQKRK…KYVSYNNLVI (65 aa)). Residues 874 to 895 (SRLSHKPSDRPNGEAKTELCEN) form a disordered region. Basic and acidic residues predominate over residues 879-892 (KPSDRPNGEAKTEL). Residue S900 is modified to Phosphoserine.

This sequence belongs to the G-protein coupled receptor 3 family. As to quaternary structure, homodimer. Interacts with PICK1. Widely distributed throughout the brain.

The protein localises to the cell membrane. G-protein coupled receptor activated by glutamate that regulates axon outgrowth through the MAPK-cAMP-PKA signaling pathway during neuronal development. Ligand binding causes a conformation change that triggers signaling via guanine nucleotide-binding proteins (G proteins) and modulates the activity of downstream effectors, such as adenylate cyclase that it inhibits. The polypeptide is Metabotropic glutamate receptor 7 (Grm7) (Rattus norvegicus (Rat)).